Consider the following 140-residue polypeptide: Putative pre-16S rRNA nuclease (140 aa).

The protein belongs to the YqgF nuclease family.

The protein resides in the cytoplasm. In terms of biological role, could be a nuclease involved in processing of the 5'-end of pre-16S rRNA. This chain is Putative pre-16S rRNA nuclease, found in Pasteurella multocida (strain Pm70).